A 210-amino-acid chain; its full sequence is Large ribosomal subunit protein uL3 (210 aa).

The protein belongs to the universal ribosomal protein uL3 family. Part of the 50S ribosomal subunit. Forms a cluster with proteins L14 and L19.

One of the primary rRNA binding proteins, it binds directly near the 3'-end of the 23S rRNA, where it nucleates assembly of the 50S subunit. The sequence is that of Large ribosomal subunit protein uL3 from Solibacter usitatus (strain Ellin6076).